The following is a 129-amino-acid chain: MATRKTTRRRRVKKNIESGVAHIHSTFNNTLVMITDMQGNAIAWSSAGSLGFKGSRKSTPFAAQMAAEAAAKASMEHGMKTVEVAVKGPGSGREAAIRALQATGLEVSAIRDVTPVPHNGSRPPKRRRV.

This sequence belongs to the universal ribosomal protein uS11 family. In terms of assembly, part of the 30S ribosomal subunit. Interacts with proteins S7 and S18. Binds to IF-3.

Its function is as follows. Located on the platform of the 30S subunit, it bridges several disparate RNA helices of the 16S rRNA. Forms part of the Shine-Dalgarno cleft in the 70S ribosome. This is Small ribosomal subunit protein uS11 from Lactiplantibacillus plantarum (strain ATCC BAA-793 / NCIMB 8826 / WCFS1) (Lactobacillus plantarum).